The primary structure comprises 216 residues: Probable GTP-binding protein EngB (216 aa).

One can recognise an EngB-type G domain in the interval Ala24–Glu205. Residues Gly32–Ser39, Gly59–Ala63, Asp86–Gly89, Thr153–Asp156, and Phe184–Ala186 each bind GTP. The Mg(2+) site is built by Ser39 and Thr61.

This sequence belongs to the TRAFAC class TrmE-Era-EngA-EngB-Septin-like GTPase superfamily. EngB GTPase family. Requires Mg(2+) as cofactor.

Functionally, necessary for normal cell division and for the maintenance of normal septation. The sequence is that of Probable GTP-binding protein EngB from Anaeromyxobacter dehalogenans (strain 2CP-C).